We begin with the raw amino-acid sequence, 493 residues long: Cobyric acid synthase (493 aa).

The GATase cobBQ-type domain occupies 246-440 (PIDIAVIKMP…IHGVFDGVSF (195 aa)). The active-site Nucleophile is the Cys326. The active site involves His432.

Belongs to the CobB/CobQ family. CobQ subfamily.

It functions in the pathway cofactor biosynthesis; adenosylcobalamin biosynthesis. In terms of biological role, catalyzes amidations at positions B, D, E, and G on adenosylcobyrinic A,C-diamide. NH(2) groups are provided by glutamine, and one molecule of ATP is hydrogenolyzed for each amidation. In Clostridium botulinum (strain Langeland / NCTC 10281 / Type F), this protein is Cobyric acid synthase.